The chain runs to 517 residues: Crotonobetaine/carnitine--CoA ligase (517 aa).

Belongs to the ATP-dependent AMP-binding enzyme family.

It catalyses the reaction 4-(trimethylamino)butanoate + ATP + CoA = 4-(trimethylamino)butanoyl-CoA + AMP + diphosphate. The enzyme catalyses crotonobetaine + ATP + CoA = crotonobetainyl-CoA + AMP + diphosphate. The catalysed reaction is (R)-carnitine + ATP + CoA = (R)-carnitinyl-CoA + AMP + diphosphate. The protein operates within amine and polyamine metabolism; carnitine metabolism. Catalyzes the transfer of CoA to carnitine, generating the initial carnitinyl-CoA needed for the CaiB reaction cycle. Also has activity toward crotonobetaine and gamma-butyrobetaine. The sequence is that of Crotonobetaine/carnitine--CoA ligase from Escherichia coli O17:K52:H18 (strain UMN026 / ExPEC).